We begin with the raw amino-acid sequence, 397 residues long: Dual oxidase maturation factor 1 (397 aa).

2 helical membrane passes run 26–46 (FVIFSVFLIPLIAYILILPGV) and 57–77 (YVLMLAVGGALIASLIYPCWA). N-linked (GlcNAc...) asparagine glycosylation is present at Asn109. 3 consecutive transmembrane segments (helical) span residues 191–211 (AAIWFAFACWCLSVVLMLFLP), 218–238 (ILATGISCLIACLVYLLLSPC), and 261–281 (CFYLIFAIGILCVLCGLGLGI). The tract at residues 324–376 (YGTNTTNSSRDKNDISSDKTAGSSGFQSRTSTCQSSASSASLRSQSSIETVHD) is disordered. N-linked (GlcNAc...) asparagine glycosylation is found at Asn327 and Asn330. Polar residues predominate over residues 341–350 (DKTAGSSGFQ). Low complexity predominate over residues 351 to 370 (SRTSTCQSSASSASLRSQSS).

It belongs to the DUOXA family. In terms of assembly, interacts with bli-3 and tsp-15. Interacts with csnk-1. Expressed in the hypodermis, specifically in seam cells, the terminal bulb of the pharynx, the distal region of the gonadal arm, vulva, spermatheca and uterus.

The protein resides in the membrane. In terms of biological role, plays a role in cuticle biogenesis. In complex with tsp-15 and the dual oxidase bli-3, promotes the generation of reactive oxygen species (ROS) and tyrosine cross-linking of collagen, thus stabilizing cuticular extracellular matrix. The polypeptide is Dual oxidase maturation factor 1 (Caenorhabditis elegans).